The sequence spans 180 residues: Endoribonuclease YbeY (180 aa).

Zn(2+) contacts are provided by histidine 118, histidine 122, and histidine 128.

Belongs to the endoribonuclease YbeY family. The cofactor is Zn(2+).

It is found in the cytoplasm. Its function is as follows. Single strand-specific metallo-endoribonuclease involved in late-stage 70S ribosome quality control and in maturation of the 3' terminus of the 16S rRNA. The polypeptide is Endoribonuclease YbeY (Rhodococcus jostii (strain RHA1)).